A 154-amino-acid chain; its full sequence is Transcriptional repressor NrdR (154 aa).

A zinc finger spans residues 3–34 (CPFCRHPDSRVIDSRETDEGQAIRRRRSCPEC). The 91-residue stretch at 46-136 (LAVVKRSGVT…VYRSFESADD (91 aa)) folds into the ATP-cone domain.

It belongs to the NrdR family. Zn(2+) is required as a cofactor.

Negatively regulates transcription of bacterial ribonucleotide reductase nrd genes and operons by binding to NrdR-boxes. The protein is Transcriptional repressor NrdR of Mycobacterium avium (strain 104).